A 316-amino-acid chain; its full sequence is protein SLOW GREEN 1, chloroplastic (316 aa).

The N-terminal 39 residues, 1-39 (MISSLSASSSLVSSFVAVKATPVTGPLIPRRDLLSIRIR), are a transit peptide targeting the chloroplast. TPR repeat units lie at residues 118–151 (VETL…QPEE), 152–185 (TEWK…NPLS), 226–259 (RDVR…DPKD), and 261–293 (RPYF…SPKK).

Ubiquitous. Preferentially expressed in newly formed green tissues.

The protein localises to the plastid. Its subcellular location is the chloroplast. Functionally, required for the early stage of chloroplast development. May be involved in chloroplast protein biosynthesis and/or degradation. The chain is protein SLOW GREEN 1, chloroplastic from Arabidopsis thaliana (Mouse-ear cress).